Consider the following 159-residue polypeptide: NADH-quinone oxidoreductase subunit B (159 aa).

4 residues coordinate [4Fe-4S] cluster: cysteine 37, cysteine 38, cysteine 102, and cysteine 132.

It belongs to the complex I 20 kDa subunit family. NDH-1 is composed of 14 different subunits. Subunits NuoB, C, D, E, F, and G constitute the peripheral sector of the complex. It depends on [4Fe-4S] cluster as a cofactor.

It localises to the cell inner membrane. The enzyme catalyses a quinone + NADH + 5 H(+)(in) = a quinol + NAD(+) + 4 H(+)(out). Its function is as follows. NDH-1 shuttles electrons from NADH, via FMN and iron-sulfur (Fe-S) centers, to quinones in the respiratory chain. Couples the redox reaction to proton translocation (for every two electrons transferred, four hydrogen ions are translocated across the cytoplasmic membrane), and thus conserves the redox energy in a proton gradient. The chain is NADH-quinone oxidoreductase subunit B from Paraburkholderia phymatum (strain DSM 17167 / CIP 108236 / LMG 21445 / STM815) (Burkholderia phymatum).